Consider the following 102-residue polypeptide: NADH-quinone oxidoreductase subunit K (102 aa).

The next 3 helical transmembrane spans lie at 4–24 (IGLN…LVGV), 31–51 (LMLF…FAAI), and 65–85 (FFVI…LIVW).

The protein belongs to the complex I subunit 4L family. As to quaternary structure, NDH-1 is composed of 14 different subunits. Subunits NuoA, H, J, K, L, M, N constitute the membrane sector of the complex.

It localises to the cell inner membrane. It carries out the reaction a quinone + NADH + 5 H(+)(in) = a quinol + NAD(+) + 4 H(+)(out). Functionally, NDH-1 shuttles electrons from NADH, via FMN and iron-sulfur (Fe-S) centers, to quinones in the respiratory chain. The immediate electron acceptor for the enzyme in this species is believed to be ubiquinone. Couples the redox reaction to proton translocation (for every two electrons transferred, four hydrogen ions are translocated across the cytoplasmic membrane), and thus conserves the redox energy in a proton gradient. This Sulfurimonas denitrificans (strain ATCC 33889 / DSM 1251) (Thiomicrospira denitrificans (strain ATCC 33889 / DSM 1251)) protein is NADH-quinone oxidoreductase subunit K.